A 194-amino-acid polypeptide reads, in one-letter code: Peptidyl-tRNA hydrolase (194 aa).

Tyr17 is a binding site for tRNA. His22 serves as the catalytic Proton acceptor. 3 residues coordinate tRNA: Tyr68, Asn70, and Asn116.

It belongs to the PTH family. In terms of assembly, monomer.

Its subcellular location is the cytoplasm. The enzyme catalyses an N-acyl-L-alpha-aminoacyl-tRNA + H2O = an N-acyl-L-amino acid + a tRNA + H(+). Hydrolyzes ribosome-free peptidyl-tRNAs (with 1 or more amino acids incorporated), which drop off the ribosome during protein synthesis, or as a result of ribosome stalling. Its function is as follows. Catalyzes the release of premature peptidyl moieties from peptidyl-tRNA molecules trapped in stalled 50S ribosomal subunits, and thus maintains levels of free tRNAs and 50S ribosomes. The polypeptide is Peptidyl-tRNA hydrolase (Pseudomonas fluorescens (strain ATCC BAA-477 / NRRL B-23932 / Pf-5)).